Consider the following 97-residue polypeptide: MQLGTGLLLAAVLSLQLAAAEAIWCHQCTGFGGCSHGSRCLRDSTHCVTTATRVLSNTEDLPLVTKMCHIGCPDIPSLGLGPYVSIACCQTSLCNHD.

An N-terminal signal peptide occupies residues 1-22 (MQLGTGLLLAAVLSLQLAAAEA). 5 cysteine pairs are disulfide-bonded: Cys-25–Cys-47, Cys-28–Cys-34, Cys-40–Cys-68, Cys-72–Cys-88, and Cys-89–Cys-94. The UPAR/Ly6 domain maps to 25-95 (CHQCTGFGGC…IACCQTSLCN (71 aa)).

Interacts with CHRNA3, CHRNA4, CHRNA5, CHRNA7, CHRNB2 and CHRNB4. Interacts with CHRM1 and CHRM3 probably in an allosteric manner. In terms of tissue distribution, expressed at highest levels in cervix and esophagus, followed by adult and fetal skin. Expressed at lower levels in brain, lung, stomach, small intestine, colon, rectum, uterus, and thymus. Not detected in spleen nor bone marrow. Up-regulated 3-fold in psoriatic lesional skin. In the epidermis, predominantly produced by keratinocytes of the suprabasal epidermal compartment (at protein level). In attached gingiva, produced at highest levels by basal cells located in the lowermost epithelial layers (at protein level). Detected in serum (at protein level).

The protein localises to the secreted. In terms of biological role, binds and may modulate the functional properties of nicotinic and muscarinic acetylcholine receptors. May regulate keratinocytes proliferation, differentiation and apoptosis. In vitro moderately inhibits ACh-evoked currents of alpha-3:beta-2-containing nAChRs and strongly these of alpha-4:beta-2-containing nAChRs, modulates alpha-7-containing nAChRs, and inhibits nicotine-induced signaling probably implicating alpha-3:beta-4-containing nAChRs. Proposed to act on alpha-3:beta-2 and alpha-7 nAChRs in an orthosteric, and on mAChRs, such as CHRM1 and CHRM3, in an allosteric manner. This Homo sapiens (Human) protein is Secreted Ly-6/uPAR domain-containing protein 2.